The sequence spans 542 residues: TNF receptor-associated factor 6 (542 aa).

The disordered stretch occupies residues 32–54 (ESFLSPTENPSTISVSSSMPPDQ). Over residues 35 to 52 (LSPTENPSTISVSSSMPP) the composition is skewed to polar residues. The segment at 71–110 (CPICLMGLRSAVQTPCGHRFCDSCIRKSIRDTGQKCPVDN) adopts an RING-type; degenerate zinc-finger fold. 2 TRAF-type zinc fingers span residues 151–203 (KHLS…AVKQ) and 204–260 (NHEQ…NELA). A coiled-coil region spans residues 311 to 373 (QCKQELLNLR…STRELEAQQY (63 aa)). Residues 374–520 (QGIYVWRVEN…EDVLLVRCEV (147 aa)) enclose the MATH domain. 489-496 (PKGFGYVT) lines the substrate pocket.

It belongs to the TNF receptor-associated factor family. A subfamily. Homotrimer. Homooligomer.

It is found in the cytoplasm. The protein localises to the cell cortex. The protein resides in the nucleus. It localises to the lipid droplet. It catalyses the reaction S-ubiquitinyl-[E2 ubiquitin-conjugating enzyme]-L-cysteine + [acceptor protein]-L-lysine = [E2 ubiquitin-conjugating enzyme]-L-cysteine + N(6)-ubiquitinyl-[acceptor protein]-L-lysine.. The protein operates within protein modification; protein ubiquitination. E3 ubiquitin ligase that, together with UBE2N and UBE2V1, mediates the synthesis of 'Lys-63'-linked-polyubiquitin chains conjugated to proteins, such as IKBKG, IRAK1, AKT1 and AKT2. Also mediates ubiquitination of free/unanchored polyubiquitin chain that leads to MAP3K7 activation. In Danio rerio (Zebrafish), this protein is TNF receptor-associated factor 6 (traf6).